Reading from the N-terminus, the 260-residue chain is Taurine import ATP-binding protein TauB (260 aa).

Positions 6-235 constitute an ABC transporter domain; sequence AHQVSVVYAS…RYAAGESMRS (230 aa). 40-47 contributes to the ATP binding site; sequence GASGCGKS.

Belongs to the ABC transporter superfamily. Taurine importer (TC 3.A.1.17.1) family. In terms of assembly, the complex is composed of two ATP-binding proteins (TauB), two transmembrane proteins (TauC) and a solute-binding protein (TauA).

It is found in the cell inner membrane. The enzyme catalyses taurine(out) + ATP + H2O = taurine(in) + ADP + phosphate + H(+). Functionally, part of the ABC transporter complex TauABC involved in taurine import. Responsible for energy coupling to the transport system. The polypeptide is Taurine import ATP-binding protein TauB (Burkholderia thailandensis (strain ATCC 700388 / DSM 13276 / CCUG 48851 / CIP 106301 / E264)).